Consider the following 407-residue polypeptide: Histone acetyltransferase mst2 (407 aa).

Residues 98-372 (PQPTSIRYLY…VNPKLLRWTP (275 aa)) form the MYST-type HAT domain. The segment at 131–156 (LYICESCLKYMNSDHVLQRHKMKCSW) adopts a C2HC MYST-type zinc-finger fold. Position 198 is an N6-acetyllysine; by autocatalysis (lysine 198). Residues 241–243 (ILT), threonine 243, and 248–254 (QRRGYGV) each bind acetyl-CoA. Glutamate 274 serves as the catalytic Proton donor/acceptor. Residues serine 278 and serine 287 each coordinate acetyl-CoA.

It belongs to the MYST (SAS/MOZ) family. In terms of assembly, component of the mst2 complex composed of at least eaf6, mst2, nto1, pdp3, ptf1, ptf2 and tfg3. Post-translationally, autoacetylation at Lys-198 is required for proper function.

The protein resides in the cytoplasm. The protein localises to the nucleus. The catalysed reaction is L-lysyl-[protein] + acetyl-CoA = N(6)-acetyl-L-lysyl-[protein] + CoA + H(+). Its function is as follows. Component of the mst2 complex which is a highly specific H3 lysine 14 (H3K14) acetyltransferase that functions together with gcn5 to regulate global levels of H3K14 acetylation (H3K14ac), critical for DNA damage checkpoint activation. Negatively regulates telomere silencing. Telomere silencing is increased due to histone hypoacetylation and/or an increase in the ratio of methylated histones to acetylated histones. Telomeric histone acetylation contributes to normal meiotic progression. The protein is Histone acetyltransferase mst2 (mst2) of Schizosaccharomyces pombe (strain 972 / ATCC 24843) (Fission yeast).